A 316-amino-acid chain; its full sequence is Malate dehydrogenase (316 aa).

Residues 12–17 (GAGNIG) and Asp36 each bind NAD(+). Residues Arg85 and Arg91 each coordinate substrate. NAD(+)-binding positions include Asn98 and 121–123 (VTN). Asn123 and Arg154 together coordinate substrate. The Proton acceptor role is filled by His178.

It belongs to the LDH/MDH superfamily. MDH type 3 family.

The catalysed reaction is (S)-malate + NAD(+) = oxaloacetate + NADH + H(+). Its function is as follows. Catalyzes the reversible oxidation of malate to oxaloacetate. This chain is Malate dehydrogenase, found in Wolbachia pipientis wMel.